Consider the following 1162-residue polypeptide: Carbamoyl phosphate synthase large chain (1162 aa).

Residues 1 to 456 (MPKRTDIKSI…SLQKALRGLE (456 aa)) are carboxyphosphate synthetic domain. ATP-binding residues include arginine 129, arginine 222, glycine 228, glycine 229, glutamate 261, valine 263, glutamate 268, glycine 294, valine 295, histidine 296, glutamine 338, and glutamate 352. An ATP-grasp 1 domain is found at 186-381 (ETEWQLGEVE…IAKVAAKLAV (196 aa)). Residues glutamine 338, glutamate 352, and asparagine 354 each contribute to the Mg(2+) site. Mn(2+) is bound by residues glutamine 338, glutamate 352, and asparagine 354. Positions 457–613 (TGLTGFDEIA…PFVGQPRSEA (157 aa)) are oligomerization domain. The interval 614-1025 (EVSDRKKVVI…AFAKAQLGAG (412 aa)) is carbamoyl phosphate synthetic domain. The 213-residue stretch at 742–954 (QKLLIKLDLN…IAKVAARIMA (213 aa)) folds into the ATP-grasp 2 domain. 10 residues coordinate ATP: arginine 778, threonine 838, leucine 840, glutamate 845, glycine 870, isoleucine 871, histidine 872, serine 873, glutamine 913, and glutamate 925. Mg(2+) is bound by residues glutamine 913, glutamate 925, and asparagine 927. Residues glutamine 913, glutamate 925, and asparagine 927 each coordinate Mn(2+). In terms of domain architecture, MGS-like spans 1026-1162 (VELPREGTVF…VRPLQDYFRS (137 aa)). The interval 1026–1162 (VELPREGTVF…VRPLQDYFRS (137 aa)) is allosteric domain.

This sequence belongs to the CarB family. As to quaternary structure, composed of two chains; the small (or glutamine) chain promotes the hydrolysis of glutamine to ammonia, which is used by the large (or ammonia) chain to synthesize carbamoyl phosphate. Tetramer of heterodimers (alpha,beta)4. It depends on Mg(2+) as a cofactor. The cofactor is Mn(2+).

The enzyme catalyses hydrogencarbonate + L-glutamine + 2 ATP + H2O = carbamoyl phosphate + L-glutamate + 2 ADP + phosphate + 2 H(+). It carries out the reaction hydrogencarbonate + NH4(+) + 2 ATP = carbamoyl phosphate + 2 ADP + phosphate + 2 H(+). It functions in the pathway amino-acid biosynthesis; L-arginine biosynthesis; carbamoyl phosphate from bicarbonate: step 1/1. It participates in pyrimidine metabolism; UMP biosynthesis via de novo pathway; (S)-dihydroorotate from bicarbonate: step 1/3. Large subunit of the glutamine-dependent carbamoyl phosphate synthetase (CPSase). CPSase catalyzes the formation of carbamoyl phosphate from the ammonia moiety of glutamine, carbonate, and phosphate donated by ATP, constituting the first step of 2 biosynthetic pathways, one leading to arginine and/or urea and the other to pyrimidine nucleotides. The large subunit (synthetase) binds the substrates ammonia (free or transferred from glutamine from the small subunit), hydrogencarbonate and ATP and carries out an ATP-coupled ligase reaction, activating hydrogencarbonate by forming carboxy phosphate which reacts with ammonia to form carbamoyl phosphate. The chain is Carbamoyl phosphate synthase large chain from Brucella melitensis biotype 1 (strain ATCC 23456 / CCUG 17765 / NCTC 10094 / 16M).